The primary structure comprises 506 residues: Ecdysteroid UDP-glucosyltransferase (506 aa).

An N-terminal signal peptide occupies residues 1–18; sequence MTILCWLALLSTLTAVNA.

This sequence belongs to the UDP-glycosyltransferase family. Post-translationally, glycosylated.

Functionally, catalyzes the transfer of glucose from UDP-glucose to ecdysteroids which are insect molting hormones. Acts on the host at the organismal level to block its development, thereby increasing the yield of progeny virus. The polypeptide is Ecdysteroid UDP-glucosyltransferase (EGT) (Lepidoptera (butterflies and moths)).